A 562-amino-acid polypeptide reads, in one-letter code: Lamassu protein LmuB (562 aa).

In terms of biological role, component of antiviral defense system Lamassu type I, composed of LmuA and LmuB. Expression of Lamassu type I in B.subtilis (strain BEST7003) confers resistance to phages phi3T, SpBeta and SPR. May be an ATPase. The sequence is that of Lamassu protein LmuB from Bacillus sp. (strain NCIM 5461 / CCTCC AB 2011126 / NIO-1130).